Here is a 434-residue protein sequence, read N- to C-terminus: ATP-dependent protease ATPase subunit HslU (434 aa).

ATP is bound by residues I18, 60-65 (GVGKTE), D247, E312, and R384.

The protein belongs to the ClpX chaperone family. HslU subfamily. A double ring-shaped homohexamer of HslV is capped on each side by a ring-shaped HslU homohexamer. The assembly of the HslU/HslV complex is dependent on binding of ATP.

The protein localises to the cytoplasm. ATPase subunit of a proteasome-like degradation complex; this subunit has chaperone activity. The binding of ATP and its subsequent hydrolysis by HslU are essential for unfolding of protein substrates subsequently hydrolyzed by HslV. HslU recognizes the N-terminal part of its protein substrates and unfolds these before they are guided to HslV for hydrolysis. This Brucella melitensis biotype 1 (strain ATCC 23456 / CCUG 17765 / NCTC 10094 / 16M) protein is ATP-dependent protease ATPase subunit HslU.